A 213-amino-acid chain; its full sequence is 3,4-dihydroxy-2-butanone 4-phosphate synthase (213 aa).

D-ribulose 5-phosphate contacts are provided by residues 37-38, Asp42, 150-154, and Glu174; these read RE and RPGHT. Mg(2+) is bound at residue Glu38. Position 153 (His153) interacts with Mg(2+).

It belongs to the DHBP synthase family. As to quaternary structure, homodimer. Mg(2+) serves as cofactor. The cofactor is Mn(2+).

The enzyme catalyses D-ribulose 5-phosphate = (2S)-2-hydroxy-3-oxobutyl phosphate + formate + H(+). Its pathway is cofactor biosynthesis; riboflavin biosynthesis; 2-hydroxy-3-oxobutyl phosphate from D-ribulose 5-phosphate: step 1/1. Functionally, catalyzes the conversion of D-ribulose 5-phosphate to formate and 3,4-dihydroxy-2-butanone 4-phosphate. This Clostridium botulinum (strain ATCC 19397 / Type A) protein is 3,4-dihydroxy-2-butanone 4-phosphate synthase.